Consider the following 233-residue polypeptide: Lipoprotein-releasing system ATP-binding protein LolD (233 aa).

Residues 6 to 233 (LQCDNLCKRY…TAELSLMGAE (228 aa)) enclose the ABC transporter domain. 42 to 49 (GSSGSGKS) contributes to the ATP binding site.

It belongs to the ABC transporter superfamily. Lipoprotein translocase (TC 3.A.1.125) family. In terms of assembly, the complex is composed of two ATP-binding proteins (LolD) and two transmembrane proteins (LolC and LolE).

It localises to the cell inner membrane. Part of the ABC transporter complex LolCDE involved in the translocation of mature outer membrane-directed lipoproteins, from the inner membrane to the periplasmic chaperone, LolA. Responsible for the formation of the LolA-lipoprotein complex in an ATP-dependent manner. This is Lipoprotein-releasing system ATP-binding protein LolD from Shigella boydii serotype 4 (strain Sb227).